Reading from the N-terminus, the 241-residue chain is ATP synthase subunit a (241 aa).

A run of 5 helical transmembrane segments spans residues 30 to 50, 91 to 111, 128 to 148, 193 to 213, and 214 to 234; these read GQVF…ISLG, FIGT…LIPW, INTT…AGLS, LVVG…VMFL, and GLFT…YYIG.

The protein belongs to the ATPase A chain family. F-type ATPases have 2 components, CF(1) - the catalytic core - and CF(0) - the membrane proton channel. CF(1) has five subunits: alpha(3), beta(3), gamma(1), delta(1), epsilon(1). CF(0) has four main subunits: a, b, b' and c.

It is found in the cellular thylakoid membrane. Its function is as follows. Key component of the proton channel; it plays a direct role in the translocation of protons across the membrane. This is ATP synthase subunit a from Prochlorococcus marinus (strain MIT 9312).